The chain runs to 455 residues: tRNA modification GTPase MnmE (455 aa).

3 residues coordinate (6S)-5-formyl-5,6,7,8-tetrahydrofolate: arginine 24, glutamate 81, and lysine 120. The region spanning 216 to 378 (GMTVVIAGRP…LREHLKACMG (163 aa)) is the TrmE-type G domain. Position 226 (asparagine 226) interacts with K(+). GTP is bound by residues 226-231 (NAGKSS), 245-251 (TDIAGTT), 270-273 (DTAG), and 335-338 (NKAD). Mg(2+) is bound at residue serine 230. 3 residues coordinate K(+): threonine 245, isoleucine 247, and threonine 250. Threonine 251 serves as a coordination point for Mg(2+). Residue lysine 455 coordinates (6S)-5-formyl-5,6,7,8-tetrahydrofolate.

The protein belongs to the TRAFAC class TrmE-Era-EngA-EngB-Septin-like GTPase superfamily. TrmE GTPase family. In terms of assembly, homodimer. Heterotetramer of two MnmE and two MnmG subunits. The cofactor is K(+).

The protein resides in the cytoplasm. Its function is as follows. Exhibits a very high intrinsic GTPase hydrolysis rate. Involved in the addition of a carboxymethylaminomethyl (cmnm) group at the wobble position (U34) of certain tRNAs, forming tRNA-cmnm(5)s(2)U34. This Ectopseudomonas mendocina (strain ymp) (Pseudomonas mendocina) protein is tRNA modification GTPase MnmE.